A 1126-amino-acid chain; its full sequence is MGENGDDKHGRSGQLFENFIQATTCKGTLQAFNILTRQLELDPQDHRHFYAKLKSKVTSWKAKALWNKLDKKHGQKEYKKGKACIGTKCLIIGGGPCGLRTAIELSCLGAKVVVVEKRDTFSRNNVLHLWPYTIHDLRCLGAKKFYGKFCAGAIDHISIWQLQLMLFKIALLHGIEIHVNVEFMKLLEPLEDQENQNIIALFCTESESPDNSECKTRLSAPVVFRCIVGIGGDHSFPNTLAFAFIYIYMNRNKEAVGPSPVWALAGRPRPLHTALLQPGRQQNRIDLENIVYYKDSTHYFVMTAKKQSLLDKGVIINDYADAEMLLCAENVDQDNLQSYAREAADFATNYQLPSLDFAINHYGQPDVAMFDFTSMYASENAALVRERHGHQLLVALVGDSLLEPFWPMGTGCARGFLAAFDTAWMVRSWAQGALPLELLAERISLLIFLNHRLTWQFLNPKKGLQTCHPNVWIPSHALRLSHHVKHLFITNELQTCSLERASSIRRSVGVSRHESDVRPNKLLIWCQKQTEGYGNVTVTNLTSSWKSGLALCALIHRFRPELVDFGSLKEDDVVGNNQLAFDIAEREFGISPMTTGKEMAATEEPDKLSMVLYLSKFYELFRGAPLRPVDTASKDNGDARSAKPSNLIVNNYLNLTLPRKRVPKDEKTSDDSDLNKRRKTVFRCFEEPANVPSRNVNSGNECNDTKEVINQNKVKSMATQLLAKFEENAPNTSLRRQESLTLSEADQAVTAPLTDPPPVNPRFAKPQEPTPSPPQAETKRQFQAVSRTQPVVRPPVQPRPGPAKPTRELRVVERAQSHPDDLGRSESLSSACPSALVLSNILERLQDLEEKAQQKRAQNLANRDFHKKNIKEKAAHLASLFGSVDLPKNKLPSLGFSHHSPQIPYSSSRTPDPPPPSSSSDSSPSSAPSRKSGMSWKGSTFFSKHSLNVWILMTVGKVSSGIGAVAEVLVNLYMCDHKPKPKSSHLGSLRKEFPANIGGSDTCYFCKRRVYVVERLSAEGHFFHRECFKCAFCSTSIRLGNYVFNVEDGNFYCQPHFMHSVTKNKHRKRRTESKAQLEEDKTWRSGEAEAAEVATDSAYSACSSSGDSSPVPLVPFNIPVLDPLIG.

The interval 2–494 (GENGDDKHGR…KHLFITNELQ (493 aa)) is monooxygenase domain. Residues Cys-97, 116–118 (EKR), 123–125 (RNN), Phe-183, Tyr-299, and Asp-399 each bind FAD. One can recognise a Calponin-homology (CH) domain in the interval 516–619 (DVRPNKLLIW…MVLYLSKFYE (104 aa)). Positions 659-680 (RKRVPKDEKTSDDSDLNKRRKT) match the Nuclear localization signal motif. Disordered regions lie at residues 748-830 (AVTA…SLSS) and 892-935 (PSLG…SGMS). A compositionally biased stretch (pro residues) spans 792–803 (VRPPVQPRPGPA). Residues 805–824 (PTRELRVVERAQSHPDDLGR) are compositionally biased toward basic and acidic residues. The segment covering 918 to 932 (SSSDSSPSSAPSRKS) has biased composition (low complexity). The LIM zinc-binding domain maps to 1001–1063 (DTCYFCKRRV…QPHFMHSVTK (63 aa)). Zn(2+) contacts are provided by Cys-1003, Cys-1006, His-1024, Cys-1027, Cys-1030, Cys-1033, Cys-1053, and His-1056.

It belongs to the Mical family. Requires FAD as cofactor.

The protein localises to the nucleus. It localises to the cytoplasm. The catalysed reaction is L-methionyl-[F-actin] + NADPH + O2 + H(+) = L-methionyl-(R)-S-oxide-[F-actin] + NADP(+) + H2O. Functionally, nuclear monooxygenase that promotes depolymerization of F-actin by mediating oxidation of specific methionine residues on actin and regulates the srf signaling. Acts by modifying nuclear actin subunits through the addition of oxygen to form methionine-sulfoxide, leading to promote actin filament severing and prevent repolymerization. Acts as a key regulator of the srf signaling pathway elicited by nerve growth factor and serum: mediates oxidation and subsequent depolymerization of nuclear actin, leading to increase mkl1/mrtf-a presence in the nucleus and promote srf:mkl1/mrtf-a-dependent gene transcription. The sequence is that of [F-actin]-monooxygenase mical2 from Xenopus tropicalis (Western clawed frog).